Reading from the N-terminus, the 506-residue chain is Maturase K (506 aa).

It belongs to the intron maturase 2 family. MatK subfamily.

It localises to the plastid. Its subcellular location is the chloroplast. Usually encoded in the trnK tRNA gene intron. Probably assists in splicing its own and other chloroplast group II introns. This Lactuca sativa (Garden lettuce) protein is Maturase K.